Here is an 85-residue protein sequence, read N- to C-terminus: Large ribosomal subunit protein bL27 (85 aa).

The tract at residues 1 to 20 is disordered; it reads MAHKKGASSSRNGRDSNAQR. Positions 7 to 19 are enriched in polar residues; sequence ASSSRNGRDSNAQ.

This sequence belongs to the bacterial ribosomal protein bL27 family.

This Kineococcus radiotolerans (strain ATCC BAA-149 / DSM 14245 / SRS30216) protein is Large ribosomal subunit protein bL27.